We begin with the raw amino-acid sequence, 360 residues long: Threonine synthase (360 aa).

Lysine 69 is subject to N6-(pyridoxal phosphate)lysine. Pyridoxal 5'-phosphate is bound by residues asparagine 95, 196 to 200, and threonine 326; that span reads GNAGN.

It belongs to the threonine synthase family. Homodimer. The cofactor is pyridoxal 5'-phosphate.

The catalysed reaction is O-phospho-L-homoserine + H2O = L-threonine + phosphate. The protein operates within amino-acid biosynthesis; L-threonine biosynthesis; L-threonine from L-aspartate: step 5/5. In terms of biological role, catalyzes the gamma-elimination of phosphate from L-phosphohomoserine and the beta-addition of water to produce L-threonine. This is Threonine synthase (thrC) from Mycobacterium bovis (strain ATCC BAA-935 / AF2122/97).